Reading from the N-terminus, the 562-residue chain is 2-hydroxyisobutanoyl-CoA mutase large subunit (562 aa).

(3S)-3-hydroxybutanoyl-CoA is bound by residues 76-79 (YPTM), 86-88 (TMR), Asp-117, 196-198 (TVQ), Arg-235, Asn-240, His-245, and Arg-284.

It belongs to the acyl-CoA mutase large subunit family. As to quaternary structure, homotetramer composed of two large substrate-binding subunits (HcmA) and two small cobalamin-binding subunits (HcmB).

It carries out the reaction 2-hydroxyisobutanoyl-CoA = (3S)-3-hydroxybutanoyl-CoA. Functionally, together with HcmB, catalyzes the isomerization of 2-hydroxyisobutyryl-CoA and 3-hydroxybutyryl-CoA. Is specific for 2-hydroxyisobutyryl-CoA and (S)-3-hydroxybutyryl-CoA, and shows only very low activity with (R)-3-hydroxybutyryl-CoA, isobutyryl-CoA and butyryl-CoA. In vitro, can isomerize pivalyl-CoA and isovaleryl-CoA, with much lower efficiency. Plays a central role in the degradation of substrates bearing a tert-butyl moiety, such as the fuel oxygenate methyl tert-butyl ether (MTBE) and its metabolites. In Aquincola tertiaricarbonis, this protein is 2-hydroxyisobutanoyl-CoA mutase large subunit.